The following is a 290-amino-acid chain: UPF0761 membrane protein YihY (290 aa).

6 helical membrane passes run 44–64 (LLSL…FPMF), 104–124 (VGAC…DSAL), 140–160 (FAVY…SLAI), 183–203 (IFPL…VPTI), 210–230 (AIVG…GFAL), and 244–264 (VLAV…IVLL).

Belongs to the UPF0761 family.

It is found in the cell inner membrane. The chain is UPF0761 membrane protein YihY from Escherichia coli O127:H6 (strain E2348/69 / EPEC).